A 422-amino-acid chain; its full sequence is MDFLEIVGQVPLKGGVEISGAKNSALPILAATLLSRQEVKIKSLPQVADIKAMALLLQNLGAELEWLNPHTLQLSTKSLHHTEATYDLVRKMRASILVLGPLLARFKECLVSLPGGCAIGARPVDLHLKAMQQLGAEIKIEQGYIHAKAPKGLKGNDILFDKISVTGTENALMAASLAKGITRIINAAKEPEIAQLCAFLQSGGVEIEGVGSSELKIRGVESDALNLKDIQIIPDRIEAGTYLCVGAITNSQLKINRIIPNHIQAITDKLIEIGFSLDIQENSIEIYPAKKRQAFEITTKEYPGFPTDMQAQFMALATQCLGTSIIEETLFENRFMHASELQRLGANISLKTNVATISGSTELTGSDVMATDLRASSALVLAALVAKGVSRVHRIYHLDRGYERLEDKINALGAKVLRLKEK.

Phosphoenolpyruvate is bound at residue 22 to 23; sequence KN. UDP-N-acetyl-alpha-D-glucosamine is bound at residue R93. C117 serves as the catalytic Proton donor. C117 carries the 2-(S-cysteinyl)pyruvic acid O-phosphothioketal modification. Residues 122 to 126, D308, and L330 each bind UDP-N-acetyl-alpha-D-glucosamine; that span reads RPVDL.

Belongs to the EPSP synthase family. MurA subfamily.

It is found in the cytoplasm. The catalysed reaction is phosphoenolpyruvate + UDP-N-acetyl-alpha-D-glucosamine = UDP-N-acetyl-3-O-(1-carboxyvinyl)-alpha-D-glucosamine + phosphate. The protein operates within cell wall biogenesis; peptidoglycan biosynthesis. Cell wall formation. Adds enolpyruvyl to UDP-N-acetylglucosamine. This Helicobacter pylori (strain HPAG1) protein is UDP-N-acetylglucosamine 1-carboxyvinyltransferase.